Here is a 254-residue protein sequence, read N- to C-terminus: Translation initiation factor 2 subunit alpha (254 aa).

In terms of domain architecture, S1 motif spans 10 to 81; it reads GDLVVVKITE…ERKNVDLSLK (72 aa).

It belongs to the eIF-2-alpha family. In terms of assembly, heterotrimer composed of an alpha, a beta and a gamma chain.

Functionally, eIF-2 functions in the early steps of protein synthesis by forming a ternary complex with GTP and initiator tRNA. The sequence is that of Translation initiation factor 2 subunit alpha from Thermoplasma volcanium (strain ATCC 51530 / DSM 4299 / JCM 9571 / NBRC 15438 / GSS1).